Here is a 204-residue protein sequence, read N- to C-terminus: Lipid A acyltransferase PagP (204 aa).

A signal peptide spans 1–25; that stretch reads MSYKHLISACIFSSLCLGQVNAVLA. Catalysis depends on residues His76, Asp119, and Ser120.

It belongs to the lipid A palmitoyltransferase family. In terms of assembly, homodimer.

The protein resides in the cell outer membrane. It carries out the reaction a lipid A + a 1,2-diacyl-sn-glycero-3-phosphocholine = a hepta-acyl lipid A + a 2-acyl-sn-glycero-3-phosphocholine. It catalyses the reaction a lipid IVA + a 1,2-diacyl-sn-glycero-3-phosphocholine = a lipid IVB + a 2-acyl-sn-glycero-3-phosphocholine. The enzyme catalyses a lipid IIA + a 1,2-diacyl-sn-glycero-3-phosphocholine = a lipid IIB + a 2-acyl-sn-glycero-3-phosphocholine. Functionally, transfers a fatty acid residue from the sn-1 position of a phospholipid to the N-linked hydroxyfatty acid chain on the proximal unit of lipid A or its precursors. The sequence is that of Lipid A acyltransferase PagP from Yersinia enterocolitica serotype O:8 / biotype 1B (strain NCTC 13174 / 8081).